Consider the following 417-residue polypeptide: Zinc finger CCCH domain-containing protein ZFN-like (417 aa).

2 consecutive C3H1-type zinc fingers follow at residues 31–58 and 75–103; these read PGEP…HPPN and RLGQ…HPKD. The C3H1-type 3; degenerate zinc-finger motif lies at 121-149; the sequence is RPNESERAYYLRTGQCKFGNTCKFHHPQP. 2 consecutive C3H1-type zinc fingers follow at residues 278–306 and 324–352; these read RPDQ…HPRE and RPGE…HPMG. Residues 383–417 are disordered; the sequence is SSEGLVESGTAKPRRLSLSETRPIPPGDDNIDDEG.

Its subcellular location is the nucleus. The polypeptide is Zinc finger CCCH domain-containing protein ZFN-like (Pisum sativum (Garden pea)).